The sequence spans 60 residues: Toxin 4.9.6 (60 aa).

Intrachain disulfides connect Cys3-Cys22, Cys17-Cys38, Cys40-Cys52, and Cys53-Cys58.

It belongs to the three-finger toxin family. Short-chain subfamily. Orphan group XI sub-subfamily. As to expression, expressed by the venom gland.

Its subcellular location is the secreted. The chain is Toxin 4.9.6 from Dendroaspis viridis (Western green mamba).